Here is a 186-residue protein sequence, read N- to C-terminus: Large ribosomal subunit protein uL5 (186 aa).

The protein belongs to the universal ribosomal protein uL5 family. In terms of assembly, part of the 50S ribosomal subunit; contacts the 5S rRNA and probably tRNA. Forms a bridge to the 30S subunit in the 70S ribosome.

Functionally, this is one of the proteins that bind and probably mediate the attachment of the 5S RNA into the large ribosomal subunit, where it forms part of the central protuberance. In the 70S ribosome it contacts protein S13 of the 30S subunit (bridge B1b), connecting the 2 subunits; this bridge is implicated in subunit movement. May contact the P site tRNA; the 5S rRNA and some of its associated proteins might help stabilize positioning of ribosome-bound tRNAs. This chain is Large ribosomal subunit protein uL5, found in Methanopyrus kandleri (strain AV19 / DSM 6324 / JCM 9639 / NBRC 100938).